Reading from the N-terminus, the 529-residue chain is Bifunctional purine biosynthesis protein PurH (529 aa).

The MGS-like domain occupies 1-148 (MQQRRPVRRA…KNHRDVAIVV (148 aa)). Position 287 is an N6-acetyllysine (Lys287).

This sequence belongs to the PurH family.

It carries out the reaction (6R)-10-formyltetrahydrofolate + 5-amino-1-(5-phospho-beta-D-ribosyl)imidazole-4-carboxamide = 5-formamido-1-(5-phospho-D-ribosyl)imidazole-4-carboxamide + (6S)-5,6,7,8-tetrahydrofolate. The enzyme catalyses IMP + H2O = 5-formamido-1-(5-phospho-D-ribosyl)imidazole-4-carboxamide. It participates in purine metabolism; IMP biosynthesis via de novo pathway; 5-formamido-1-(5-phospho-D-ribosyl)imidazole-4-carboxamide from 5-amino-1-(5-phospho-D-ribosyl)imidazole-4-carboxamide (10-formyl THF route): step 1/1. Its pathway is purine metabolism; IMP biosynthesis via de novo pathway; IMP from 5-formamido-1-(5-phospho-D-ribosyl)imidazole-4-carboxamide: step 1/1. This Escherichia coli O6:K15:H31 (strain 536 / UPEC) protein is Bifunctional purine biosynthesis protein PurH.